The sequence spans 488 residues: Fumarate hydratase, mitochondrial (488 aa).

Residues 1 to 24 (MLRFTNCSCKTFVKSSYKLNIRRM) constitute a mitochondrion transit peptide. Substrate contacts are provided by residues 124–126 (SGT), 154–157 (HPNN), 164–166 (SSN), and threonine 212. The active-site Proton donor/acceptor is histidine 213. Residue serine 343 is part of the active site. Residues serine 344 and 349–351 (KVN) contribute to the substrate site. Threonine 428 is modified (phosphothreonine).

Belongs to the class-II fumarase/aspartase family. Fumarase subfamily. Homotetramer.

Its subcellular location is the mitochondrion matrix. It localises to the cytoplasm. The protein localises to the nucleus. The catalysed reaction is (S)-malate = fumarate + H2O. It functions in the pathway carbohydrate metabolism; tricarboxylic acid cycle; (S)-malate from fumarate: step 1/1. Catalyzes the reversible stereospecific interconversion of fumarate to L-malate. In mitochondrion, catalyzes the hydration of fumarate to L-malate in the tricarboxylic acid (TCA) cycle to facilitate a transition step in the production of energy in the form of NADH. In cytoplasm and nucleus, involved in DNA repair in response to DNA damage: following DNA double-strand breaks (DSBs), translocates from the cytosol to the nucleus and promotes DNA repair by catalyzing the dehydration of L-malate to fumarate. The polypeptide is Fumarate hydratase, mitochondrial (Saccharomyces cerevisiae (strain ATCC 204508 / S288c) (Baker's yeast)).